The following is a 106-amino-acid chain: ATP-dependent Clp protease adapter protein ClpS (106 aa).

The segment covering 1 to 10 (MSQKTVHDQD) has biased composition (basic and acidic residues). The segment at 1 to 23 (MSQKTVHDQDNALLLETGNTKVA) is disordered.

The protein belongs to the ClpS family. As to quaternary structure, binds to the N-terminal domain of the chaperone ClpA.

Involved in the modulation of the specificity of the ClpAP-mediated ATP-dependent protein degradation. The polypeptide is ATP-dependent Clp protease adapter protein ClpS (Xylella fastidiosa (strain M23)).